Reading from the N-terminus, the 57-residue chain is Protein GnsB (57 aa).

It belongs to the gns family.

Its function is as follows. Overexpression increases levels of unsaturated fatty acids and suppresses both the temperature-sensitive fabA6 mutation and cold-sensitive secG null mutation. The sequence is that of Protein GnsB (gnsB) from Escherichia coli (strain K12).